The primary structure comprises 206 residues: Homoserine/homoserine lactone efflux protein (206 aa).

Helical transmembrane passes span 5–25 (WWFA…SGAI), 45–65 (GLQT…GTLF), 68–88 (SLIA…WLGI), 117–137 (FVNL…PQFI), 148–168 (LILG…YATL), and 182–202 (MKAL…LLAS).

Belongs to the Rht family.

Its subcellular location is the cell membrane. Its function is as follows. Conducts the efflux of homoserine and homoserine lactone. This chain is Homoserine/homoserine lactone efflux protein (rhtB), found in Salmonella typhi.